Consider the following 369-residue polypeptide: Ubiquitin-conjugating enzyme E2 Q2 (369 aa).

The segment at D117–E143 is disordered. Acidic residues predominate over residues V131–E143. The 165-residue stretch at Q198–Y362 folds into the UBC core domain. Residue C298 is the Glycyl thioester intermediate of the active site.

Belongs to the ubiquitin-conjugating enzyme family. Auto-ubiquitinated in vitro. Detected at embryo implantation sites in the luminal epithelium of pregnant endometrium. Detected at low levels in ovary and liver.

The protein resides in the cytoplasm. It carries out the reaction S-ubiquitinyl-[E1 ubiquitin-activating enzyme]-L-cysteine + [E2 ubiquitin-conjugating enzyme]-L-cysteine = [E1 ubiquitin-activating enzyme]-L-cysteine + S-ubiquitinyl-[E2 ubiquitin-conjugating enzyme]-L-cysteine.. The protein operates within protein modification; protein ubiquitination. Accepts ubiquitin from the E1 complex and catalyzes its covalent attachment to other proteins. In vitro catalyzes 'Lys-48'-linked polyubiquitination. The polypeptide is Ubiquitin-conjugating enzyme E2 Q2 (UBE2Q2) (Oryctolagus cuniculus (Rabbit)).